A 492-amino-acid polypeptide reads, in one-letter code: KAT8 regulatory NSL complex subunit 2 (492 aa).

Residue K78 forms a Glycyl lysine isopeptide (Lys-Gly) (interchain with G-Cter in SUMO2) linkage. Positions 126–182 (ELGSQTPESSRSEASRILDEDSWSDGEQEPITVDQTWRGDPDSEADSIDRDQEDPLK) are disordered. Position 131 is a phosphothreonine (T131). Positions 135 to 144 (SRSEASRILD) are enriched in basic and acidic residues. S147, S149, S168, and S172 each carry phosphoserine. Residues 162-182 (WRGDPDSEADSIDRDQEDPLK) are compositionally biased toward basic and acidic residues. The tract at residues 308–364 (DVRCSNQSLPMTRHCLTHICQDTNRVLFKCCQGSEEVPCNKPVPVSLSEDPCCPLHF) is required for interaction with other NSL complex members. The tract at residues 453–492 (QMAGDGCRSQGPRNSEKAPAPLSQSGIATANGKPEPTSVS) is disordered.

As to quaternary structure, component of the NSL complex at least composed of KAT8/MOF, KANSL1, KANSL2, KANSL3, MCRS1, PHF20, OGT1/OGT, WDR5 and HCFC1. Ubiquitously expressed.

Its subcellular location is the nucleus. It localises to the mitochondrion. Functionally, non-catalytic component of the NSL histone acetyltransferase complex, a multiprotein complex that mediates histone H4 acetylation at 'Lys-5'- and 'Lys-8' (H4K5ac and H4K8ac) at transcription start sites and promotes transcription initiation. Required for NSL complex stability and for transcription of intraciliary transport genes in both ciliated and non-ciliated cells by regulating histone H4 acetylation at 'Lys-5'- and 'Lys-12' (H4K5ac and H4K12ac). This is necessary for cilium assembly in ciliated cells and for organization of the microtubule cytoskeleton in non-ciliated cells. Required within the NSL complex to maintain nuclear architecture stability by promoting KAT8-mediated acetylation of lamin LMNA. The polypeptide is KAT8 regulatory NSL complex subunit 2 (KANSL2) (Capra hircus (Goat)).